Consider the following 174-residue polypeptide: Gamma-crystallin E (174 aa).

Beta/gamma crystallin 'Greek key' domains are found at residues 2–40 and 41–83; these read GKIT…RVDS and GCWM…RLIP. The connecting peptide stretch occupies residues 84–87; sequence HSSS. 2 Beta/gamma crystallin 'Greek key' domains span residues 88 to 128 and 129 to 171; these read HRIK…HVME and GYWV…RRIM.

Belongs to the beta/gamma-crystallin family. In terms of tissue distribution, detected in the superior olivary complex of the auditory hindbrain.

Crystallins are the dominant structural components of the vertebrate eye lens. This is Gamma-crystallin E (Cryge) from Mus musculus (Mouse).